Here is a 337-residue protein sequence, read N- to C-terminus: DnaJ homolog dnj-2 (337 aa).

The helical transmembrane segment at 4–24 (AIAAPILFLLVSFFVQECESV) threads the bilayer. The region spanning 36-105 (NCYDVLEVNR…EAKTNYDYYL (70 aa)) is the J domain. 2 consecutive transmembrane segments (helical) span residues 127–147 (VDLRIVIVGTILIISLFQFLS) and 222–242 (LAWHTIIFPLTIFRYIKWTAL). Residues 293–323 (LKRNCATWKAERDAAEQEKMAQSGRYKRYKR) are a coiled coil.

The protein belongs to the DNAJC25 family.

It is found in the membrane. This is DnaJ homolog dnj-2 (dnj-2) from Caenorhabditis elegans.